The following is a 547-amino-acid chain: Isoflavonoid 7-O-beta-apiosyl-glucoside beta-glycosidase (547 aa).

The N-terminal stretch at 1 to 31 is a signal peptide; the sequence is MHAMTFKAILLLGLLALVSTSASIAFAKEVR. Gln-59 is an a beta-D-glucoside binding site. 2 N-linked (GlcNAc...) asparagine glycosylation sites follow: Asn-72 and Asn-132. His-159 provides a ligand contact to a beta-D-glucoside. The N-linked (GlcNAc...) asparagine glycan is linked to Asn-175. Residue 204 to 205 participates in a beta-D-glucoside binding; the sequence is NE. The Proton donor role is filled by Glu-205. Cys-224 and Cys-232 are disulfide-bonded. Asn-285 carries N-linked (GlcNAc...) asparagine glycosylation. A beta-D-glucoside contacts are provided by residues Tyr-348, Glu-419, Trp-468, 475 to 476, and Phe-484; that span reads EW. Glu-419 (nucleophile) is an active-site residue. Residue Asn-490 is glycosylated (N-linked (GlcNAc...) asparagine).

It belongs to the glycosyl hydrolase 1 family. In terms of assembly, homotetramer.

The enzyme catalyses 7-[beta-D-apiofuranosyl-(1-&gt;6)-beta-D-glucopyranosyloxy]isoflavonoid + H2O = a 7-hydroxyisoflavonoid + beta-D-apiofuranosyl-(1-&gt;6)-D-glucose.. Not inhibited by iron, calcium, mercury, manganese, zinc or EDTA. Hydrolyzes dalpatein 7-O-beta-D-apiofuranosyl-(1-&gt;6)-beta-D-glucopyranoside and dalnigrein 7-O-beta-D-apiofuranosyl-(1-&gt;6)-beta-D-glucopyranoside. Also has activity towards pNP-beta-D-fucoside and pNP-beta-D-glucoside, but not pNP-beta-cellobioside. This chain is Isoflavonoid 7-O-beta-apiosyl-glucoside beta-glycosidase, found in Dalbergia nigrescens (Thai blackwood).